A 167-amino-acid chain; its full sequence is Peptide deformylase (167 aa).

C91 and H133 together coordinate Fe cation. Residue E134 is part of the active site. H137 contributes to the Fe cation binding site.

It belongs to the polypeptide deformylase family. Fe(2+) serves as cofactor.

The catalysed reaction is N-terminal N-formyl-L-methionyl-[peptide] + H2O = N-terminal L-methionyl-[peptide] + formate. Functionally, removes the formyl group from the N-terminal Met of newly synthesized proteins. Requires at least a dipeptide for an efficient rate of reaction. N-terminal L-methionine is a prerequisite for activity but the enzyme has broad specificity at other positions. In Nitrosococcus oceani (strain ATCC 19707 / BCRC 17464 / JCM 30415 / NCIMB 11848 / C-107), this protein is Peptide deformylase.